The sequence spans 449 residues: Biotin carboxylase (449 aa).

Positions 4–448 constitute a Biotin carboxylation domain; that stretch reads MIEKVLIANR…NIHYLEKMLG (445 aa). ATP is bound by residues lysine 119, lysine 162, 168-169, 204-207, histidine 212, and histidine 239; these read GG and EKYL. Residues 123–320 form the ATP-grasp domain; sequence IAAMKAAGVP…IVKEQILIAA (198 aa). Lysine 241 contacts hydrogencarbonate. ATP is bound by residues glutamate 279 and glutamate 291. The Mg(2+) site is built by glutamate 279, glutamate 291, and asparagine 293. Mn(2+) is bound by residues glutamate 279, glutamate 291, and asparagine 293. The hydrogencarbonate site is built by arginine 295, valine 298, and arginine 341. Arginine 295 is a catalytic residue. Residue arginine 341 coordinates biotin.

Acetyl-CoA carboxylase is a heterohexamer of biotin carboxyl carrier protein, biotin carboxylase and the two subunits of carboxyl transferase in a 2:2 complex. The cofactor is Mg(2+). It depends on Mn(2+) as a cofactor.

The catalysed reaction is N(6)-biotinyl-L-lysyl-[protein] + hydrogencarbonate + ATP = N(6)-carboxybiotinyl-L-lysyl-[protein] + ADP + phosphate + H(+). The protein operates within lipid metabolism; malonyl-CoA biosynthesis; malonyl-CoA from acetyl-CoA: step 1/1. Functionally, this protein is a component of the acetyl coenzyme A carboxylase complex; first, biotin carboxylase catalyzes the carboxylation of the carrier protein and then the transcarboxylase transfers the carboxyl group to form malonyl-CoA. The protein is Biotin carboxylase (accC) of Allochromatium vinosum (strain ATCC 17899 / DSM 180 / NBRC 103801 / NCIMB 10441 / D) (Chromatium vinosum).